The following is a 451-amino-acid chain: Zinc metalloproteinase nas-16 (451 aa).

One can recognise a Peptidase M12A domain in the interval 70–273 (QVVTKLFSPQ…LTINTAYNCK (204 aa)). 4 cysteine pairs are disulfide-bonded: Cys-127–Cys-272, Cys-148–Cys-167, Cys-274–Cys-291, and Cys-296–Cys-305. Asn-133 carries an N-linked (GlcNAc...) asparagine glycan. His-175 provides a ligand contact to Zn(2+). Residue Glu-176 is part of the active site. Zn(2+) contacts are provided by His-179 and His-185. Positions 267–306 (NTAYNCKCPSELLCANGGYTNPSNCLECICPLGYGGVLCD) constitute an EGF-like domain. N-linked (GlcNAc...) asparagine glycosylation is found at Asn-363 and Asn-438.

Requires Zn(2+) as cofactor.

It localises to the secreted. Functionally, metalloprotease. This Caenorhabditis elegans protein is Zinc metalloproteinase nas-16 (nas-16).